A 323-amino-acid chain; its full sequence is HPr kinase/phosphorylase (323 aa).

Catalysis depends on residues histidine 146 and lysine 167. Residue 161-168 coordinates ATP; the sequence is GESGLGKS. A Mg(2+)-binding site is contributed by serine 168. Aspartate 185 serves as the catalytic Proton acceptor; for phosphorylation activity. Proton donor; for dephosphorylation activity. The segment at 209–218 is important for the catalytic mechanism of both phosphorylation and dephosphorylation; that stretch reads LEVRGLGLLD. Residue glutamate 210 participates in Mg(2+) binding. Residue arginine 250 is part of the active site. The interval 271 to 276 is important for the catalytic mechanism of dephosphorylation; it reads QVAAGR.

It belongs to the HPrK/P family. Homohexamer. Requires Mg(2+) as cofactor.

The catalysed reaction is [HPr protein]-L-serine + ATP = [HPr protein]-O-phospho-L-serine + ADP + H(+). The enzyme catalyses [HPr protein]-O-phospho-L-serine + phosphate + H(+) = [HPr protein]-L-serine + diphosphate. Its function is as follows. Catalyzes the ATP- as well as the pyrophosphate-dependent phosphorylation of a specific serine residue in HPr, a phosphocarrier protein of the phosphoenolpyruvate-dependent sugar phosphotransferase system (PTS). HprK/P also catalyzes the pyrophosphate-producing, inorganic phosphate-dependent dephosphorylation (phosphorolysis) of seryl-phosphorylated HPr (P-Ser-HPr). In Cupriavidus necator (strain ATCC 17699 / DSM 428 / KCTC 22496 / NCIMB 10442 / H16 / Stanier 337) (Ralstonia eutropha), this protein is HPr kinase/phosphorylase.